A 238-amino-acid chain; its full sequence is Probable transcriptional regulatory protein VV2_1184 (238 aa).

It belongs to the TACO1 family.

It localises to the cytoplasm. In Vibrio vulnificus (strain CMCP6), this protein is Probable transcriptional regulatory protein VV2_1184.